We begin with the raw amino-acid sequence, 144 residues long: D-aminoacyl-tRNA deacylase (144 aa).

The Gly-cisPro motif, important for rejection of L-amino acids motif lies at 136–137 (GP).

This sequence belongs to the DTD family. Homodimer.

It localises to the cytoplasm. It carries out the reaction glycyl-tRNA(Ala) + H2O = tRNA(Ala) + glycine + H(+). The enzyme catalyses a D-aminoacyl-tRNA + H2O = a tRNA + a D-alpha-amino acid + H(+). Its function is as follows. An aminoacyl-tRNA editing enzyme that deacylates mischarged D-aminoacyl-tRNAs. Also deacylates mischarged glycyl-tRNA(Ala), protecting cells against glycine mischarging by AlaRS. Acts via tRNA-based rather than protein-based catalysis; rejects L-amino acids rather than detecting D-amino acids in the active site. By recycling D-aminoacyl-tRNA to D-amino acids and free tRNA molecules, this enzyme counteracts the toxicity associated with the formation of D-aminoacyl-tRNA entities in vivo and helps enforce protein L-homochirality. The sequence is that of D-aminoacyl-tRNA deacylase from Histophilus somni (strain 129Pt) (Haemophilus somnus).